Reading from the N-terminus, the 501-residue chain is 1-aminocyclopropane-1-carboxylate synthase-like protein 1 (501 aa).

Residue Glu105 participates in substrate binding. Lys323 is subject to N6-(pyridoxal phosphate)lysine. The tract at residues Gly480–Arg501 is disordered. Positions Pro490–Arg501 are enriched in polar residues.

It belongs to the class-I pyridoxal-phosphate-dependent aminotransferase family.

Does not catalyze the synthesis of 1-aminocyclopropane-1-carboxylate but is capable of catalyzing the deamination of L-vinylglycine. The chain is 1-aminocyclopropane-1-carboxylate synthase-like protein 1 (ACCS) from Homo sapiens (Human).